A 298-amino-acid chain; its full sequence is uncharacterized protein (298 aa).

An HTH araC/xylS-type domain is found at 194–295 (KRLNTALIAI…QLSPSQYRKS (102 aa)). 2 consecutive DNA-binding regions (H-T-H motif) follow at residues 214-235 (EQLA…QQHI) and 262-285 (VLAI…KNYY).

This is an uncharacterized protein from Haemophilus influenzae (strain ATCC 51907 / DSM 11121 / KW20 / Rd).